A 105-amino-acid polypeptide reads, in one-letter code: MINDIKQLHKRYRLLVHLSNNHVYAQIIDDLNNRTVLSVSTLTPQVKSKLSITCNKKAAELVGEYVAQQALNFGIRNVVFDRGRKLYHGKVEVLANSARSFGLKF.

Belongs to the universal ribosomal protein uL18 family. As to quaternary structure, part of the 50S ribosomal subunit; contacts the 5S rRNA.

The protein resides in the plastid. It localises to the chloroplast. Functionally, binds 5S rRNA, forms part of the central protuberance of the 50S subunit. This chain is Large ribosomal subunit protein uL18c (rpl18), found in Cyanidium caldarium (Red alga).